Reading from the N-terminus, the 307-residue chain is MAESDRLLGGYDPNAGYSAHAGAQPQRIPVPSLLRALLSEHLDAGYAAVAAERERAAAPRCWQARAVSWMWQALAATLVAAVFAAAVAQARSVAPGVRAAQQLLVASVRSTQAAATTLAQRRSTLSAKVDDVRRIVLADDAEGQRLLARLDVLSLAAASAPVVGPGLTVTVTDPGASPNLSDVSKQRVSGSQQIILDRDLQLVVNSLWESGAEAISIDGVRIGPNVTIRQAGGAILVDNNPTSSPYTILAVGPPHAMQDVFDRSAGLYRLRLLETSYGVGVSVNVGDGLALPAGATRDVKFAKQIGP.

Residues 1 to 23 form the signal peptide; the sequence is MAESDRLLGGYDPNAGYSAHAGA. A run of 2 helical transmembrane segments spans residues 67–87 and 152–172; these read VSWMWQALAATLVAAVFAAAV and VLSLAAASAPVVGPGLTVTVT.

The protein belongs to the UPF0749 family.

Its subcellular location is the cell membrane. This chain is UPF0749 protein MT1871, found in Mycobacterium tuberculosis (strain CDC 1551 / Oshkosh).